The chain runs to 166 residues: Zinc finger CCHC domain-containing protein 13 (166 aa).

The segment at 4 to 21 adopts a CCHC-type 1; degenerate zinc-finger fold; sequence KDFFACGHSGHWARGCPR. The CCHC-type 2; degenerate zinc-finger motif lies at 45–62; it reads YTCYCCGESGRNAKNCVL. 4 consecutive CCHC-type zinc fingers follow at residues 65-82, 89-106, 110-127, and 128-145; these read NICY…DCKD, QHCY…DCDR, QKCY…DCAQ, and VKCY…NCSK.

The chain is Zinc finger CCHC domain-containing protein 13 (ZCCHC13) from Homo sapiens (Human).